The chain runs to 77 residues: Liver-expressed antimicrobial peptide 2 (77 aa).

An N-terminal signal peptide occupies residues 1–22; sequence MWHLKLCAVLMIFLLLLGQIDG. A propeptide spanning residues 23–37 is cleaved from the precursor; that stretch reads SPIPEVSSAKRRPRR. 2 disulfides stabilise this stretch: C54–C65 and C60–C70.

Belongs to the LEAP2 family.

It is found in the secreted. In terms of biological role, has an antimicrobial activity. This is Liver-expressed antimicrobial peptide 2 (LEAP2) from Homo sapiens (Human).